A 98-amino-acid chain; its full sequence is Large ribosomal subunit protein eL21 (98 aa).

Residues 1-24 (MVKKAHSFRRKTRGKLSKHPRRRG) show a composition bias toward basic residues. The disordered stretch occupies residues 1–27 (MVKKAHSFRRKTRGKLSKHPRRRGLPP).

The protein belongs to the eukaryotic ribosomal protein eL21 family. Part of the 50S ribosomal subunit.

In Thermococcus kodakarensis (strain ATCC BAA-918 / JCM 12380 / KOD1) (Pyrococcus kodakaraensis (strain KOD1)), this protein is Large ribosomal subunit protein eL21.